A 232-amino-acid polypeptide reads, in one-letter code: tRNA (guanine-N(1)-)-methyltransferase (232 aa).

Residues Gly111 and 131 to 136 (IGDYIL) each bind S-adenosyl-L-methionine.

The protein belongs to the RNA methyltransferase TrmD family. Homodimer.

It is found in the cytoplasm. It carries out the reaction guanosine(37) in tRNA + S-adenosyl-L-methionine = N(1)-methylguanosine(37) in tRNA + S-adenosyl-L-homocysteine + H(+). Its function is as follows. Specifically methylates guanosine-37 in various tRNAs. This chain is tRNA (guanine-N(1)-)-methyltransferase, found in Bartonella bacilliformis (strain ATCC 35685 / KC583 / Herrer 020/F12,63).